We begin with the raw amino-acid sequence, 141 residues long: Hemoglobin subunit alpha-D/D' (141 aa).

A Globin domain is found at 1 to 141 (MLTADDKKLI…VAAVLAEKYR (141 aa)). The heme b site is built by histidine 58 and histidine 87.

Belongs to the globin family. In terms of assembly, heterotetramer of two alpha-D chains and two beta chains. Red blood cells.

In terms of biological role, involved in oxygen transport from the lung to the various peripheral tissues. This chain is Hemoglobin subunit alpha-D/D' (HBAD), found in Gyps rueppelli (Rueppell's griffon).